The sequence spans 551 residues: MGEINRRNFLKASMLGAAAAAVASASAVKGMVSPLVADAADIVAPITETSEFPYKVDAKYQRYNSLKNFFEKTFDPEANKTPIKFHYDDVSKITGKKDTGKDLPTLNAERLGIKGRPATHTETSILFQTQHLGAMLTQRHNETGWTGLDEALNAGAWAVEFDYSGFNAAGGGPGSVIPLYPINPMTNEIANEPVMVPGLYNWDNIDVESVRQQGQQWKFESKEEASKMVKKATRLLGADLVGIAPYDERWTYSTWGRKILKPCKMPNGRTKYLPWDLPKMLSGGGVEVFGHAKFEPDWEKYAGFKPKSVIVFVLEEDYEAIRTSPSVISSATVGKSYSNMAEVAYKIAVFLRKLGYYAAPCGNDTGLSVPMAVQAGLGEAGRNGLLITQKFGPRHRIAKVYTDLELAPDKPRKFGVREFCRLCKKCADACPAQAISHEKDPKVLQPEDCEVAENPYTEKWHLDSNRCGSFWAYNGSPCANCVAVCSWNKVETWNHDVARIATQIPLLQDAARKFDEWFGYNGPVNPDERLESGYVQNMVKDFWNNPESIKQ.

Positions 1–39 (MGEINRRNFLKASMLGAAAAAVASASAVKGMVSPLVADA) form a signal peptide, tat-type signal. A 4Fe-4S ferredoxin-type 1 domain is found at 411–440 (PRKFGVREFCRLCKKCADACPAQAISHEKD). Cys420, Cys423, Cys426, Cys430, Cys467, Cys478, Cys481, and Cys485 together coordinate [4Fe-4S] cluster. The 4Fe-4S ferredoxin-type 2 domain maps to 478-496 (CANCVAVCSWNKVETWNHD).

Belongs to the PceA family. In terms of assembly, monomer. The cofactor is [4Fe-4S] cluster. Corrinoid is required as a cofactor. In terms of processing, predicted to be exported by the Tat system. The position of the signal peptide cleavage has been experimentally proven.

Its subcellular location is the cell membrane. The catalysed reaction is trichloroethene + chloride + A + H(+) = tetrachloroethene + AH2. It catalyses the reaction trichloroethene + AH2 = (Z)-1,2-dichloroethene + chloride + A + H(+). With respect to regulation, activity is inhibited by ammonium ions. Photoreversibly inactivated by 1-iodopropane. Functionally, catalyzes the reductive dechlorination of tetrachloroethene (PCE) to trichloroethene (TCE) and of trichloroethene to cis-1,2-dichloroethene (DCE). Can also use trichlorofluoroethene, tetrachloromethane, hexachloroethane, tetrachloroethane, trichloroethane and 1,1,1-trichloro-2,2,2-trifluoroethane. Menaquinone can act as the electron donor. Reduced methyl viologen can act as the artificial electron donor. The protein is Tetrachloroethene reductive dehalogenase of Dehalobacter restrictus (strain DSM 9455 / PER-K23).